Consider the following 456-residue polypeptide: O-phospho-L-seryl-tRNA:Cys-tRNA synthase 2 (456 aa).

Pyridoxal 5'-phosphate contacts are provided by residues 146-147, Asn-251, and 274-276; these read AR and SGH. Lys-277 is subject to N6-(pyridoxal phosphate)lysine.

The protein belongs to the SepCysS family. In terms of assembly, homodimer. Interacts with SepRS. It depends on pyridoxal 5'-phosphate as a cofactor.

It catalyses the reaction O-phospho-L-seryl-tRNA(Cys) + hydrogen sulfide + H(+) = L-cysteinyl-tRNA(Cys) + phosphate. Converts O-phospho-L-seryl-tRNA(Cys) (Sep-tRNA(Cys)) to L-cysteinyl-tRNA(Cys) (Cys-tRNA(Cys)). This is O-phospho-L-seryl-tRNA:Cys-tRNA synthase 2 from Methanospirillum hungatei JF-1 (strain ATCC 27890 / DSM 864 / NBRC 100397 / JF-1).